The following is a 350-amino-acid chain: 3-isopropylmalate dehydrogenase (350 aa).

76–87 (GPKWDNAPKRPE) is a binding site for NAD(+). Residues Arg94, Arg104, Arg132, and Asp217 each coordinate substrate. 3 residues coordinate Mg(2+): Asp217, Asp241, and Asp245. Residue 275–287 (GSAPDIANQNIAN) coordinates NAD(+).

Belongs to the isocitrate and isopropylmalate dehydrogenases family. LeuB type 1 subfamily. In terms of assembly, homodimer. Mg(2+) is required as a cofactor. The cofactor is Mn(2+).

It localises to the cytoplasm. It carries out the reaction (2R,3S)-3-isopropylmalate + NAD(+) = 4-methyl-2-oxopentanoate + CO2 + NADH. It functions in the pathway amino-acid biosynthesis; L-leucine biosynthesis; L-leucine from 3-methyl-2-oxobutanoate: step 3/4. Functionally, catalyzes the oxidation of 3-carboxy-2-hydroxy-4-methylpentanoate (3-isopropylmalate) to 3-carboxy-4-methyl-2-oxopentanoate. The product decarboxylates to 4-methyl-2 oxopentanoate. The chain is 3-isopropylmalate dehydrogenase from Listeria monocytogenes serotype 4b (strain F2365).